The chain runs to 236 residues: Purine nucleoside phosphorylase DeoD-type (236 aa).

An a purine D-ribonucleoside-binding site is contributed by H4. Residues G20, R24, R43, and 87–90 (RVGT) each bind phosphate. A purine D-ribonucleoside contacts are provided by residues 179–181 (EME) and 203–204 (SD). The active-site Proton donor is D204.

The protein belongs to the PNP/UDP phosphorylase family. Homohexamer; trimer of homodimers.

The enzyme catalyses a purine D-ribonucleoside + phosphate = a purine nucleobase + alpha-D-ribose 1-phosphate. It catalyses the reaction a purine 2'-deoxy-D-ribonucleoside + phosphate = a purine nucleobase + 2-deoxy-alpha-D-ribose 1-phosphate. Its function is as follows. Catalyzes the reversible phosphorolytic breakdown of the N-glycosidic bond in the beta-(deoxy)ribonucleoside molecules, with the formation of the corresponding free purine bases and pentose-1-phosphate. This Streptococcus pneumoniae (strain JJA) protein is Purine nucleoside phosphorylase DeoD-type.